Consider the following 173-residue polypeptide: Protein SHI RELATED SEQUENCE 8 (173 aa).

Residues C52, C63, C68, C72, and C79 each contribute to the Zn(2+) site. The zn(2)-C6 fungal-type; degenerate DNA-binding region spans C52–C79. Residues L100–P110 are compositionally biased toward low complexity. Residues L100–E121 are disordered.

It belongs to the SHI protein family.

The protein resides in the nucleus. In terms of biological role, transcription activator that binds DNA on 5'-ACTCTAC-3' and promotes auxin homeostasis-regulating gene expression (e.g. YUC genes), as well as genes affecting stamen development, cell expansion and timing of flowering. Synergistically with other SHI-related proteins, regulates gynoecium, stamen and leaf development in a dose-dependent manner, controlling apical-basal patterning. Promotes style and stigma formation, and influence vascular development during gynoecium development. May also have a role in the formation and/or maintenance of the shoot apical meristem (SAM). The polypeptide is Protein SHI RELATED SEQUENCE 8 (SRS8) (Arabidopsis thaliana (Mouse-ear cress)).